The chain runs to 283 residues: Peflin (283 aa).

8 tandem repeats follow at residues 21–30 (PQTNYYGGQQ), 36–44 (QPAASYGRP), 45–54 (APGAPYGSPP), 55–62 (SGGVYGHP), 71–79 (APGGPYGGQ), 80–87 (APGGPYSV), 88–95 (PGSTPYGS), and 96–104 (QQHGSYGQG). The segment at 21 to 104 (PQTNYYGGQQ…SQQHGSYGQG (84 aa)) is 8 X 9 AA approximate tandem repeat of [AP]-P-G-G-P-Y-G-G-P-P. The segment covering 37-70 (PAASYGRPAPGAPYGSPPSGGVYGHPVPGSAAPG) has biased composition (low complexity). The disordered stretch occupies residues 37–113 (PAASYGRPAP…GAPAGNIPPG (77 aa)). The segment covering 71 to 81 (APGGPYGGQAP) has biased composition (gly residues). Residues 93-104 (YGSQQHGSYGQG) show a composition bias toward low complexity. EF-hand domains lie at 113–148 (GVDP…TNWS), 154–179 (TCTM…SALW), 180–215 (RFIQ…MGYQ), 216–252 (LSPQ…LQSM), and 253–282 (TEAF…TTRL). Ca(2+) is bound by residues D126, D128, S130, Y132, and E137. Residues D193, D195, S197, S199, and E204 each contribute to the Ca(2+) site.

In terms of assembly, heterodimer; heterodimerizes (via the EF-hand 5) with pdcd6.

It localises to the cytoplasm. The protein localises to the endoplasmic reticulum. The protein resides in the membrane. It is found in the cytoplasmic vesicle. Its subcellular location is the COPII-coated vesicle membrane. In terms of biological role, calcium-binding protein that acts as an adapter that bridges unrelated proteins or stabilizes weak protein-protein complexes in response to calcium. Acts as a negative regulator of ER-Golgi transport. The polypeptide is Peflin (Xenopus laevis (African clawed frog)).